We begin with the raw amino-acid sequence, 521 residues long: NAD(P)H-quinone oxidoreductase subunit 2 (521 aa).

The next 14 helical transmembrane spans lie at 14 to 34 (VILP…TDLI), 42 to 62 (LTPA…TLQW), 79 to 99 (LSIV…LLSI), 109 to 129 (LGEF…LSGA), 132 to 152 (LVTI…LTGY), 167 to 187 (LLIG…LYGL), 207 to 227 (LALL…ISAV), 241 to 261 (PTPI…ALAI), 275 to 295 (WHFV…VVAL), 303 to 323 (LLAY…IAGT), 331 to 351 (VYYL…VILF), 375 to 395 (LGLS…GFFG), 397 to 417 (LYLF…LALI), and 463 to 483 (AGLV…NPLF).

This sequence belongs to the complex I subunit 2 family. In terms of assembly, NDH-1 can be composed of about 15 different subunits; different subcomplexes with different compositions have been identified which probably have different functions.

The protein resides in the cellular thylakoid membrane. It carries out the reaction a plastoquinone + NADH + (n+1) H(+)(in) = a plastoquinol + NAD(+) + n H(+)(out). It catalyses the reaction a plastoquinone + NADPH + (n+1) H(+)(in) = a plastoquinol + NADP(+) + n H(+)(out). In terms of biological role, NDH-1 shuttles electrons from an unknown electron donor, via FMN and iron-sulfur (Fe-S) centers, to quinones in the respiratory and/or the photosynthetic chain. The immediate electron acceptor for the enzyme in this species is believed to be plastoquinone. Couples the redox reaction to proton translocation, and thus conserves the redox energy in a proton gradient. Cyanobacterial NDH-1 also plays a role in inorganic carbon-concentration. The polypeptide is NAD(P)H-quinone oxidoreductase subunit 2 (Synechococcus elongatus (strain ATCC 33912 / PCC 7942 / FACHB-805) (Anacystis nidulans R2)).